Consider the following 489-residue polypeptide: Glucose-6-phosphate 1-dehydrogenase (489 aa).

NADP(+) is bound by residues Gly15 to Lys22, Arg49, Asp86 to Val87, and Lys149. His179, Lys183, Glu217, and Asp236 together coordinate substrate. His241 (proton acceptor) is an active-site residue. 2 residues coordinate substrate: Lys341 and Lys346.

Belongs to the glucose-6-phosphate dehydrogenase family.

It catalyses the reaction D-glucose 6-phosphate + NADP(+) = 6-phospho-D-glucono-1,5-lactone + NADPH + H(+). The protein operates within carbohydrate degradation; pentose phosphate pathway; D-ribulose 5-phosphate from D-glucose 6-phosphate (oxidative stage): step 1/3. Its function is as follows. Catalyzes the oxidation of glucose 6-phosphate to 6-phosphogluconolactone. This Bacillus subtilis (strain 168) protein is Glucose-6-phosphate 1-dehydrogenase.